The chain runs to 114 residues: MILDRHITSRGYVCMRPATIAPLTPYDKWDGEKWVTDTEAQHSVAVDAAEAQRQSLIDTAMASISLIQLKLQAGRKLMQAETSRLNTVLDYIDAVTATDTSTAPDVIWPELPEE.

Belongs to the tfa family.

The protein is Putative protein TfaS (tfaS) of Escherichia coli (strain K12).